A 366-amino-acid polypeptide reads, in one-letter code: Actin-like protein 8 (366 aa).

This sequence belongs to the actin family. In terms of tissue distribution, strongly expressed in testis and pancreas. Weak expression in placenta.

Its subcellular location is the cytoplasm. The protein localises to the cytoskeleton. The sequence is that of Actin-like protein 8 (ACTL8) from Homo sapiens (Human).